A 338-amino-acid chain; its full sequence is Large ribosomal subunit protein uL3 (338 aa).

Residues 230–258 (HRKGHRRTGTIGPQAPAVMFTQPRPGQMG) are disordered.

It belongs to the universal ribosomal protein uL3 family. In terms of assembly, part of the 50S ribosomal subunit. Forms a cluster with proteins L14 and L24e.

One of the primary rRNA binding proteins, it binds directly near the 3'-end of the 23S rRNA, where it nucleates assembly of the 50S subunit. This Pyrobaculum aerophilum (strain ATCC 51768 / DSM 7523 / JCM 9630 / CIP 104966 / NBRC 100827 / IM2) protein is Large ribosomal subunit protein uL3.